The chain runs to 739 residues: Phosphoribosylformylglycinamidine synthase subunit PurL (739 aa).

His54 is an active-site residue. Tyr57 and Lys96 together coordinate ATP. Glu98 lines the Mg(2+) pocket. Residues 99–102 (SHNH) and Arg121 each bind substrate. His100 acts as the Proton acceptor in catalysis. Mg(2+) is bound at residue Asp122. Gln245 serves as a coordination point for substrate. Asp275 lines the Mg(2+) pocket. Residue 319–321 (ESQ) coordinates substrate. ATP is bound by residues Asp504 and Gly541. Asn542 contributes to the Mg(2+) binding site. Substrate is bound at residue Ser544.

The protein belongs to the FGAMS family. In terms of assembly, monomer. Part of the FGAM synthase complex composed of 1 PurL, 1 PurQ and 2 PurS subunits.

The protein resides in the cytoplasm. The catalysed reaction is N(2)-formyl-N(1)-(5-phospho-beta-D-ribosyl)glycinamide + L-glutamine + ATP + H2O = 2-formamido-N(1)-(5-O-phospho-beta-D-ribosyl)acetamidine + L-glutamate + ADP + phosphate + H(+). It participates in purine metabolism; IMP biosynthesis via de novo pathway; 5-amino-1-(5-phospho-D-ribosyl)imidazole from N(2)-formyl-N(1)-(5-phospho-D-ribosyl)glycinamide: step 1/2. Functionally, part of the phosphoribosylformylglycinamidine synthase complex involved in the purines biosynthetic pathway. Catalyzes the ATP-dependent conversion of formylglycinamide ribonucleotide (FGAR) and glutamine to yield formylglycinamidine ribonucleotide (FGAM) and glutamate. The FGAM synthase complex is composed of three subunits. PurQ produces an ammonia molecule by converting glutamine to glutamate. PurL transfers the ammonia molecule to FGAR to form FGAM in an ATP-dependent manner. PurS interacts with PurQ and PurL and is thought to assist in the transfer of the ammonia molecule from PurQ to PurL. The polypeptide is Phosphoribosylformylglycinamidine synthase subunit PurL (Lactococcus lactis subsp. lactis (strain IL1403) (Streptococcus lactis)).